Here is a 703-residue protein sequence, read N- to C-terminus: Solute carrier family 28 member 3 (703 aa).

Residues 1-19 (MSRADPGKNSEPSESKMSL) show a composition bias toward basic and acidic residues. A disordered region spans residues 1-93 (MSRADPGKNS…DPEDDSEDEH (93 aa)). At 1–117 (MSRADPGKNS…FCRKHRVVLR (117 aa)) the chain is on the cytoplasmic side. Polar residues predominate over residues 44-61 (QNTPGNSTVRNRVVQSGE). The span at 63–72 (GHAKQDDRQI) shows a compositional bias: basic and acidic residues. Residues 118–138 (STIWAVLLTGFLALVIAACAI) traverse the membrane as a helical segment. The Extracellular portion of the chain corresponds to 139-143 (NFHRA). The chain crosses the membrane as a helical span at residues 144 to 164 (LPLFVITLVTIFFVIWDHLMA). Over 165-188 (KYEQRIDDFLSPGRRLLDRHWFWL) the chain is Cytoplasmic. The helical transmembrane segment at 189-209 (KWVVWSSLILAIILWLSLDTA) threads the bilayer. The Extracellular portion of the chain corresponds to 210-212 (KLG). Residues 213–234 (QQNLVSFGGLIMYLILLFLFSK) form a helical membrane-spanning segment. Residues 235–242 (HPTRVYWR) are Cytoplasmic-facing. A helical membrane pass occupies residues 243–262 (PVFWGIGLQFLLGLLILRTR). Residues 263–299 (PGFVAFDWMGRQVQTFLGYTDTGARFVFGEKYTDHFF) lie on the Extracellular side of the membrane. The chain crosses the membrane as a helical span at residues 300–320 (AFKILPIVVFFSTVMSMLYYL). Residues 321–344 (GLMQWIIRKVGWLMLVTMGSSPIE) are Cytoplasmic-facing. The segment at residues 345 to 363 (SVVAAGNIFIGQTESPLLV) is an intramembrane region (helical). The Cytoplasmic portion of the chain corresponds to 364–376 (QPYLPHVTKSELH). A helical membrane pass occupies residues 377–399 (TIMTAGFATIAGSVLGAYISFGV). At 400 to 401 (SS) the chain is on the extracellular side. Residues 402 to 423 (THLLTASVMSAPAALAVAKLFW) form a helical membrane-spanning segment. Residues 424–458 (PETEKPKITLKSAMKMENGDSRNLLEAASQGASSS) lie on the Cytoplasmic side of the membrane. A helical membrane pass occupies residues 459 to 484 (IPLVANIAANLIAFLALLSFVNSALS). Over 485-522 (WFGSMFNYPELSFELICSYIFMPFSFMMGVDWQDSFMV) the chain is Extracellular. The segment at residues 523–542 (AKLIGYKTFFNEFVAYDHLS) is an intramembrane region (helical). At 543–581 (KLINLRKAAGPKFVNGVQQYMSIRSETIATYALCGFANF) the chain is on the extracellular side. The chain crosses the membrane as a helical span at residues 582–592 (GSLGIVIGGLT). The Cytoplasmic portion of the chain corresponds to 593 to 605 (SIAPSRKRDIASG). A helical transmembrane segment spans residues 606 to 628 (AMRALIAGTIACFMTACIAGILS). Topologically, residues 629–703 (DTPVDINCHH…LNCNWIPNKL (75 aa)) are extracellular.

This sequence belongs to the concentrative nucleoside transporter (CNT) (TC 2.A.41) family. Homotrimer.

It is found in the cell membrane. It carries out the reaction thymidine(out) + 2 Na(+)(out) = thymidine(in) + 2 Na(+)(in). The catalysed reaction is cytidine(out) + 2 Na(+)(out) = cytidine(in) + 2 Na(+)(in). The enzyme catalyses uridine(out) + 2 Na(+)(out) = uridine(in) + 2 Na(+)(in). It catalyses the reaction adenosine(out) + 2 Na(+)(out) = adenosine(in) + 2 Na(+)(in). It carries out the reaction guanosine(out) + 2 Na(+)(out) = guanosine(in) + 2 Na(+)(in). The catalysed reaction is inosine(out) + 2 Na(+)(out) = inosine(in) + 2 Na(+)(in). Its function is as follows. Sodium-dependent, pyrimidine- and purine-selective. Involved in the homeostasis of endogenous nucleosides. Exhibits the transport characteristics of the nucleoside transport system cib or N3 subtype (N3/cib) (with marked transport of both thymidine and inosine). Employs a 2:1 sodium/nucleoside ratio. Also able to transport gemcitabine, 3'-azido-3'-deoxythymidine (AZT), ribavirin and 3-deazauridine. This is Solute carrier family 28 member 3 (Slc28a3) from Mus musculus (Mouse).